Reading from the N-terminus, the 304-residue chain is Nod factor export ATP-binding protein I (304 aa).

The ABC transporter domain occupies 6–236 (IDFQQVEKRY…EIGCDVIEIY (231 aa)). 38-45 (GPNGAGKT) contributes to the ATP binding site.

This sequence belongs to the ABC transporter superfamily. Lipooligosaccharide exporter (TC 3.A.1.102) family. In terms of assembly, the complex is composed of two ATP-binding proteins (NodI) and two transmembrane proteins (NodJ).

Its subcellular location is the cell inner membrane. In terms of biological role, part of the ABC transporter complex NodIJ involved in the export of the nodulation factors (Nod factors), the bacterial signal molecules that induce symbiosis and subsequent nodulation induction. Nod factors are LCO (lipo-chitin oligosaccharide), a modified beta-1,4-linked N-acetylglucosamine oligosaccharide. This subunit is responsible for energy coupling to the transport system. This Burkholderia thailandensis (strain ATCC 700388 / DSM 13276 / CCUG 48851 / CIP 106301 / E264) protein is Nod factor export ATP-binding protein I.